Here is a 77-residue protein sequence, read N- to C-terminus: Large ribosomal subunit protein bL28 (77 aa).

This sequence belongs to the bacterial ribosomal protein bL28 family.

In Delftia acidovorans (strain DSM 14801 / SPH-1), this protein is Large ribosomal subunit protein bL28.